Here is a 381-residue protein sequence, read N- to C-terminus: L-lactate dehydrogenase (381 aa).

Residues 1–380 (MIISASTDYR…SADSLVRELG (380 aa)) form the FMN hydroxy acid dehydrogenase domain. Residue tyrosine 24 coordinates substrate. FMN is bound by residues serine 106 and glutamine 127. Tyrosine 129 is a substrate binding site. Threonine 155 lines the FMN pocket. Arginine 164 is a binding site for substrate. Lysine 251 lines the FMN pocket. Histidine 275 acts as the Proton acceptor in catalysis. Position 278 (arginine 278) interacts with substrate. Residue 306–330 (DSGIRTGLDVVRMIALGADSVLLGR) coordinates FMN.

The protein belongs to the FMN-dependent alpha-hydroxy acid dehydrogenase family. Homotetramer. FMN is required as a cofactor.

It localises to the cell inner membrane. The catalysed reaction is (S)-lactate + A = pyruvate + AH2. Its function is as follows. Catalyzes the conversion of L-lactate to pyruvate. Is coupled to the respiratory chain. The sequence is that of L-lactate dehydrogenase from Pseudomonas paraeruginosa (strain DSM 24068 / PA7) (Pseudomonas aeruginosa (strain PA7)).